A 344-amino-acid polypeptide reads, in one-letter code: uncharacterized protein (344 aa).

A coiled-coil region spans residues 221-249; that stretch reads IQAQSMDEQKQIQEIYQNVEKLKEDVTKN.

It belongs to the IIV-6 287R family.

This is an uncharacterized protein from Aedes vexans (Inland floodwater mosquito).